Consider the following 1387-residue polypeptide: DNA-directed RNA polymerase subunit beta' (1387 aa).

The Zn(2+) site is built by cysteine 70, cysteine 72, cysteine 85, and cysteine 88. Mg(2+) is bound by residues aspartate 461, aspartate 463, and aspartate 465. Residues cysteine 808, cysteine 882, cysteine 889, and cysteine 892 each coordinate Zn(2+). The interval 1367–1387 is disordered; that stretch reads QDEAKGVGQETPRLSGQEAAE.

The protein belongs to the RNA polymerase beta' chain family. In terms of assembly, the RNAP catalytic core consists of 2 alpha, 1 beta, 1 beta' and 1 omega subunit. When a sigma factor is associated with the core the holoenzyme is formed, which can initiate transcription. Mg(2+) is required as a cofactor. It depends on Zn(2+) as a cofactor.

It catalyses the reaction RNA(n) + a ribonucleoside 5'-triphosphate = RNA(n+1) + diphosphate. DNA-dependent RNA polymerase catalyzes the transcription of DNA into RNA using the four ribonucleoside triphosphates as substrates. The protein is DNA-directed RNA polymerase subunit beta' of Granulibacter bethesdensis (strain ATCC BAA-1260 / CGDNIH1).